A 340-amino-acid polypeptide reads, in one-letter code: Formimidoylglutamase (340 aa).

Residues histidine 129, aspartate 160, histidine 162, aspartate 164, aspartate 257, and aspartate 259 each coordinate Mn(2+).

Belongs to the arginase family. It depends on Mn(2+) as a cofactor.

It catalyses the reaction N-formimidoyl-L-glutamate + H2O = formamide + L-glutamate. The protein operates within amino-acid degradation; L-histidine degradation into L-glutamate; L-glutamate from N-formimidoyl-L-glutamate (hydrolase route): step 1/1. Its function is as follows. Catalyzes the conversion of N-formimidoyl-L-glutamate to L-glutamate and formamide. The protein is Formimidoylglutamase of Vibrio parahaemolyticus serotype O3:K6 (strain RIMD 2210633).